The primary structure comprises 142 residues: Transcription antitermination protein NusB (142 aa).

It belongs to the NusB family.

In terms of biological role, involved in transcription antitermination. Required for transcription of ribosomal RNA (rRNA) genes. Binds specifically to the boxA antiterminator sequence of the ribosomal RNA (rrn) operons. This Roseiflexus sp. (strain RS-1) protein is Transcription antitermination protein NusB.